Here is a 356-residue protein sequence, read N- to C-terminus: TPR repeat-containing protein P27G11.02 (356 aa).

Residues 1–20 (MRMQWIWKSRRSLQNVFIRR) constitute a mitochondrion transit peptide. 2 TPR repeats span residues 194-227 (SRLFEQSATLYFQAGTPSYAVPLYHEALNLTMAN) and 290-323 (AAAFYTLGQIAERQGNIDLALKHYKNSEALRKDD).

The protein localises to the mitochondrion. This Schizosaccharomyces pombe (strain 972 / ATCC 24843) (Fission yeast) protein is TPR repeat-containing protein P27G11.02.